Here is a 103-residue protein sequence, read N- to C-terminus: uncharacterized protein (103 aa).

Residues 69-103 (SSISYPGGGGGGGGSAKSLSSSKPGGGGGSPLIFL) form a disordered region. Gly residues-rich tracts occupy residues 74 to 83 (PGGGGGGGGS) and 92 to 103 (PGGGGGSPLIFL).

This is an uncharacterized protein from Saccharomyces cerevisiae (strain ATCC 204508 / S288c) (Baker's yeast).